A 695-amino-acid polypeptide reads, in one-letter code: Parasporal crystal protein Cry18Ca (695 aa).

The protein belongs to the delta endotoxin family.

Its function is as follows. Binds to the brush border membrane vesicles of scarab larvae and damages the gut wall somehow to allow the vegetative cells of P.popilliae to enter the hemolymph. This chain is Parasporal crystal protein Cry18Ca (cry18Ca), found in Paenibacillus popilliae (Bacillus popilliae).